The following is a 295-amino-acid chain: Protease HtpX (295 aa).

2 helical membrane passes run 4–24 and 41–61; these read ILLFVATNLAVVLVASITLSL and SSLLVFCAVFGFAGSLVSLFI. His-147 lines the Zn(2+) pocket. Glu-148 is an active-site residue. His-151 contacts Zn(2+). 2 consecutive transmembrane segments (helical) span residues 158-178 and 199-219; these read VTLALVQGVVNTFVMFFARII and VATIVAELILGILASMIVMWF. Residue Glu-224 participates in Zn(2+) binding.

This sequence belongs to the peptidase M48B family. It depends on Zn(2+) as a cofactor.

Its subcellular location is the cell inner membrane. This chain is Protease HtpX, found in Pseudomonas putida (strain GB-1).